A 508-amino-acid chain; its full sequence is Photosystem II CP47 reaction center protein (508 aa).

Transmembrane regions (helical) follow at residues 21–36, 101–115, 140–156, 203–218, 237–252, and 457–472; these read AVHI…WAGS, IVFS…IWHW, GIHL…FGAF, IAAG…FHLS, VLSS…AFVV, and TFAL…HGAR.

It belongs to the PsbB/PsbC family. PsbB subfamily. In terms of assembly, PSII is composed of 1 copy each of membrane proteins PsbA, PsbB, PsbC, PsbD, PsbE, PsbF, PsbH, PsbI, PsbJ, PsbK, PsbL, PsbM, PsbT, PsbX, PsbY, PsbZ, Psb30/Ycf12, at least 3 peripheral proteins of the oxygen-evolving complex and a large number of cofactors. It forms dimeric complexes. Binds multiple chlorophylls. PSII binds additional chlorophylls, carotenoids and specific lipids. serves as cofactor.

The protein localises to the plastid. It is found in the chloroplast thylakoid membrane. One of the components of the core complex of photosystem II (PSII). It binds chlorophyll and helps catalyze the primary light-induced photochemical processes of PSII. PSII is a light-driven water:plastoquinone oxidoreductase, using light energy to abstract electrons from H(2)O, generating O(2) and a proton gradient subsequently used for ATP formation. This Lolium perenne (Perennial ryegrass) protein is Photosystem II CP47 reaction center protein.